Consider the following 414-residue polypeptide: tRNA N6-adenosine threonylcarbamoyltransferase, mitochondrial (414 aa).

The N-terminal 29 residues, 1–29 (MLILTKTAGVFFKPSKRKVYEFLRSFNFH), are a transit peptide targeting the mitochondrion. Residues K74 and K140 each carry the N6-acetyllysine modification. A divalent metal cation contacts are provided by H147 and H151. Substrate is bound by residues 169 to 173 (LISGG) and D202. K203 carries the N6-acetyllysine modification. G222 and E226 together coordinate substrate. K230, K240, and K299 each carry N6-acetyllysine. Substrate-binding positions include 329–330 (SN) and T357. Residue D358 participates in a divalent metal cation binding.

This sequence belongs to the KAE1 / TsaD family. As to quaternary structure, monomer. It depends on a divalent metal cation as a cofactor. As to expression, widely expressed, with maximum expression in pituitary gland, prostate, rectum and uterus.

The protein localises to the mitochondrion. The enzyme catalyses L-threonylcarbamoyladenylate + adenosine(37) in tRNA = N(6)-L-threonylcarbamoyladenosine(37) in tRNA + AMP + H(+). Its function is as follows. Required for the formation of a threonylcarbamoyl group on adenosine at position 37 (t(6)A37) in mitochondrial tRNAs that read codons beginning with adenine. Probably involved in the transfer of the threonylcarbamoyl moiety of threonylcarbamoyl-AMP (TC-AMP) to the N6 group of A37. Involved in mitochondrial genome maintenance. The chain is tRNA N6-adenosine threonylcarbamoyltransferase, mitochondrial from Homo sapiens (Human).